The primary structure comprises 926 residues: Peripheral plasma membrane protein CASK (926 aa).

Residues 12–276 (YELCEVIGKG…VYEALNHPWL (265 aa)) form the Protein kinase domain. ATP contacts are provided by residues 18-26 (IGKGPFSVV) and Lys-41. Ser-51 carries the post-translational modification Phosphoserine. Asp-141 is an active-site residue. Phosphoserine; by autocatalysis occurs at positions 151 and 155. Residue Thr-182 is modified to Phosphothreonine. Phosphoserine is present on residues Lys-192 and Ser-313. Residues 305–315 (KGAVLAAVSSH) form a calmodulin-binding region. L27 domains lie at 343–398 (AERA…SPQI) and 402–455 (PSDA…YSDE). A required for interaction with NRXN1 (via C-terminal tail) region spans residues 482 to 909 (MENVTRVRLV…DETIRHLEEA (428 aa)). The PDZ domain maps to 489 to 564 (RLVQFQKNTD…MLREMRGSIT (76 aa)). Phosphoserine occurs at positions 571 and 577. Residues 574–610 (QSSSCERDSPSTSRQSPANGHSSTNNSVSDLPSTTQP) form a disordered region. The region spanning 612 to 682 (GRQIYVRAQF…PSPELQEWRV (71 aa)) is the SH3 domain. The Guanylate kinase-like domain occupies 739–911 (RKTLVLLGAH…TIRHLEEAVE (173 aa)).

It in the N-terminal section; belongs to the protein kinase superfamily. CAMK Ser/Thr protein kinase family. CaMK subfamily. The protein belongs to the MAGUK family. CASK and LIN7 form two mutually exclusive tripartite complexes with APBA1 or CASKIN1. Component of the brain-specific heterotrimeric complex (LIN-10-LIN-2-LIN-7 complex) composed of at least APBA1, CASK, and LIN7, which associates with the motor protein KIF17 to transport vesicles along microtubules. Forms a heterotrimeric complex with DLG1 and LIN7B via their L27 domains. Identified in a complex with ACTN4, IQGAP1, MAGI2, NPHS1, SPTAN1 and SPTBN1. Part of a complex containing CASK, TBR1 and TSPYL2. Interacts with WHRN. Interacts (via the PDZ, SH3 and guanylate kinase-like domains) with NRXN1 (via C-terminus). Interacts with CASKIN1, APBA1, LIN7(A/B/C) and L27 domain of DLG1 and isoform 2 of DLG4. Interacts with FCHSD2. Interacts with KIRREL3. Interacts with TBR1. Interacts with TSPYL2. Unlike other protein kinases, does not require a divalent cation such as magnesium for catalytic activity. serves as cofactor. In terms of tissue distribution, ubiquitous. Expression is significantly greater in brain relative to kidney, lung, and liver and in fetal brain and kidney relative to lung and liver.

The protein resides in the nucleus. It localises to the cytoplasm. Its subcellular location is the cell membrane. The enzyme catalyses L-seryl-[protein] + ATP = O-phospho-L-seryl-[protein] + ADP + H(+). The catalysed reaction is L-threonyl-[protein] + ATP = O-phospho-L-threonyl-[protein] + ADP + H(+). With respect to regulation, differs from archetypal CaMK members in that the kinase domain exhibits a constitutively active conformation and the autoinhibitory region does not engage in direct contact with the ATP-binding cleft, although it still binds Ca(2+)/CAM. Its function is as follows. Multidomain scaffolding Mg(2+)-independent protein kinase that catalyzes the phosphotransfer from ATP to proteins such as NRXN1, and plays a role in synaptic transmembrane protein anchoring and ion channel trafficking. Contributes to neural development and regulation of gene expression via interaction with the transcription factor TBR1. Binds to cell-surface proteins, including amyloid precursor protein, neurexins and syndecans. May mediate a link between the extracellular matrix and the actin cytoskeleton via its interaction with syndecan and with the actin/spectrin-binding protein 4.1. Component of the LIN-10-LIN-2-LIN-7 complex, which associates with the motor protein KIF17 to transport vesicles containing N-methyl-D-aspartate (NMDA) receptor subunit NR2B along microtubules. This Homo sapiens (Human) protein is Peripheral plasma membrane protein CASK.